The primary structure comprises 146 residues: 3-hydroxyacyl-[acyl-carrier-protein] dehydratase FabZ (146 aa).

Residue histidine 49 is part of the active site.

The protein belongs to the thioester dehydratase family. FabZ subfamily.

It localises to the cytoplasm. It catalyses the reaction a (3R)-hydroxyacyl-[ACP] = a (2E)-enoyl-[ACP] + H2O. Its function is as follows. Involved in unsaturated fatty acids biosynthesis. Catalyzes the dehydration of short chain beta-hydroxyacyl-ACPs and long chain saturated and unsaturated beta-hydroxyacyl-ACPs. This is 3-hydroxyacyl-[acyl-carrier-protein] dehydratase FabZ from Pseudomonas putida (strain ATCC 700007 / DSM 6899 / JCM 31910 / BCRC 17059 / LMG 24140 / F1).